A 460-amino-acid chain; its full sequence is Cysteine--tRNA ligase (460 aa).

Cys28 serves as a coordination point for Zn(2+). Positions 30 to 40 match the 'HIGH' region motif; it reads MTVYDYCHLGH. Residues Cys209, His234, and Glu238 each coordinate Zn(2+). The 'KMSKS' region signature appears at 266-270; the sequence is KMSKS. Lys269 is an ATP binding site.

Belongs to the class-I aminoacyl-tRNA synthetase family. As to quaternary structure, monomer. Requires Zn(2+) as cofactor.

The protein resides in the cytoplasm. It catalyses the reaction tRNA(Cys) + L-cysteine + ATP = L-cysteinyl-tRNA(Cys) + AMP + diphosphate. This chain is Cysteine--tRNA ligase, found in Pseudomonas putida (strain GB-1).